Here is a 111-residue protein sequence, read N- to C-terminus: Cornifelin homolog (111 aa).

The protein belongs to the cornifelin family.

The polypeptide is Cornifelin homolog (cnfn) (Xenopus tropicalis (Western clawed frog)).